The primary structure comprises 121 residues: Ubiquitin-related modifier 1 (121 aa).

Gly121 carries the post-translational modification 1-thioglycine. Gly121 is covalently cross-linked (Glycyl lysine isopeptide (Gly-Lys) (interchain with K-? in acceptor proteins)).

This sequence belongs to the URM1 family. C-terminal thiocarboxylation occurs in 2 steps, it is first acyl-adenylated (-COAMP) via the hesA/moeB/thiF part of UBA4, then thiocarboxylated (-COSH) via the rhodanese domain of UBA4.

It is found in the cytoplasm. Its pathway is tRNA modification; 5-methoxycarbonylmethyl-2-thiouridine-tRNA biosynthesis. In terms of biological role, acts as a sulfur carrier required for 2-thiolation of mcm(5)S(2)U at tRNA wobble positions of cytosolic tRNA(Lys), tRNA(Glu) and tRNA(Gln). Serves as sulfur donor in tRNA 2-thiolation reaction by being thiocarboxylated (-COSH) at its C-terminus by the MOCS3 homolog UBA4. The sulfur is then transferred to tRNA to form 2-thiolation of mcm(5)S(2)U. Prior mcm(5) tRNA modification by the elongator complex is required for 2-thiolation. Also acts as a ubiquitin-like protein (UBL) that is covalently conjugated via an isopeptide bond to lysine residues of target proteins such as AHP1. The thiocarboxylated form serves as substrate for conjugation and oxidative stress specifically induces the formation of UBL-protein conjugates. In Ajellomyces capsulatus (strain NAm1 / WU24) (Darling's disease fungus), this protein is Ubiquitin-related modifier 1.